Here is a 406-residue protein sequence, read N- to C-terminus: Purine nucleoside permease (406 aa).

A signal peptide spans 1–22 (MKLSTLFTLATTISTLTTFTIA).

Belongs to the NUP family.

Mammalian nucleoside transport inhibitors dipyridamole and NBMPR inhibit adenosine transport by NUP. In terms of biological role, nucleoside permease that transports adenosine and guanosine. Does not show any transport activities towards cytidine, adenine, guanine, uridine, and uracil. The sequence is that of Purine nucleoside permease from Candida albicans (Yeast).